A 234-amino-acid chain; its full sequence is Orotidine 5'-phosphate decarboxylase (234 aa).

Substrate is bound by residues Asp-14, Lys-36, 63–72 (DLKFHDIPNT), Thr-123, Arg-184, Gln-193, Gly-213, and Arg-214. Lys-65 serves as the catalytic Proton donor.

It belongs to the OMP decarboxylase family. Type 1 subfamily. As to quaternary structure, homodimer.

It carries out the reaction orotidine 5'-phosphate + H(+) = UMP + CO2. It functions in the pathway pyrimidine metabolism; UMP biosynthesis via de novo pathway; UMP from orotate: step 2/2. Catalyzes the decarboxylation of orotidine 5'-monophosphate (OMP) to uridine 5'-monophosphate (UMP). This Psychromonas ingrahamii (strain DSM 17664 / CCUG 51855 / 37) protein is Orotidine 5'-phosphate decarboxylase.